We begin with the raw amino-acid sequence, 363 residues long: Circumsporozoite protein (363 aa).

The N-terminal stretch at 1–22 (MKNFILLAVSSILLVDLLPTHF) is a signal peptide. Over residues 48 to 57 (GAQQVRQSAS) the composition is skewed to polar residues. The disordered stretch occupies residues 48 to 278 (GAQQVRQSAS…GQNNQGANAP (231 aa)). The span at 61–96 (GLGEKPKEGADKEKKKEKGKEKEEEPKKPNENKLKQ) shows a compositional bias: basic and acidic residues. The interval 80 to 88 (KEKEEEPKK) is required for the binding to heparan sulfate proteoglycans (HSPGs) on the surface of host hepatocytes. The interval 93–97 (KLKQP) is region I; contains the proteolytic cleavage site. The stretch at 98 to 109 (NEGQPQAQGDGA) is one 1; approximate repeat. The interval 98–241 (NEGQPQAQGD…GQPQAQGDGA (144 aa)) is 12 X 12 AA approximate tandem repeats of N-A-G-Q-P-Q-A-Q-G-D-G-A. 11 tandem repeats follow at residues 110 to 121 (NAGQPQAQGDGA), 122 to 133 (NAGQPQAQGDGA), 134 to 145 (NAGQPQAQGDGA), 146 to 157 (NAGQPQAQGDGA), 158 to 169 (NAGQPQAQGDGA), 170 to 181 (NAGQPQAQGDGA), 182 to 193 (NAGQPQAQGDGA), 194 to 205 (NAGQPQAQGDGA), 206 to 217 (NAGQPQAQGDGA), 218 to 229 (NAGQPQAQGDGA), and 230 to 241 (NAGQPQAQGDGA). The span at 248–259 (RNGGGAPAGGNE) shows a compositional bias: gly residues. Residues 260–277 (GNKQAGKGQGQNNQGANA) show a composition bias toward low complexity. A TSP type-1 domain is found at 289-341 (KIRSSVTTEWTPCSVTCGNGVRIRRKAHAGNKKAEDLTMDDLEVEACVMDKCA). 2 disulfide bridges follow: cysteine 301/cysteine 335 and cysteine 305/cysteine 340. Threonine 304 carries an O-linked (Fuc) threonine glycan. Cysteine 340 carries GPI-anchor amidated cysteine lipidation. The propeptide at 341-363 (AGIFNVVSNSLGLVILLVLALFN) is removed in mature form.

This sequence belongs to the plasmodium circumsporozoite protein family. During host cell invasion, proteolytically cleaved at the cell membrane in the region I by a papain-like cysteine protease of parasite origin. Cleavage is triggered by the sporozoite contact with highly sulfated heparan sulfate proteoglycans (HSPGs) present on the host hepatocyte cell surface. Cleavage exposes the TSP type-1 (TSR) domain and is required for productive invasion of host hepatocytes but not for adhesion to the host cell membrane. Cleavage is dispensable for sporozoite development in the oocyst, motility and for traversal of host and vector cells. Post-translationally, O-glycosylated; maybe by POFUT2.

It localises to the cell membrane. The protein localises to the cytoplasm. Essential sporozoite protein. In the mosquito vector, required for sporozoite development in the oocyst, migration through the vector hemolymph and entry into the vector salivary glands. In the vertebrate host, required for sporozoite migration through the host dermis and infection of host hepatocytes. Binds to highly sulfated heparan sulfate proteoglycans (HSPGs) on the surface of host hepatocytes. In terms of biological role, in the vertebrate host, binds to highly sulfated heparan sulfate proteoglycans (HSPGs) on the surface of host hepatocytes and is required for sporozoite invasion of the host hepatocytes. The sequence is that of Circumsporozoite protein from Plasmodium knowlesi (strain H).